Here is a 475-residue protein sequence, read N- to C-terminus: Ribulose bisphosphate carboxylase large chain (475 aa).

Residues 1 to 2 (MS) constitute a propeptide that is removed on maturation. P3 bears the N-acetylproline mark. Residue K14 is modified to N6,N6,N6-trimethyllysine. N123 and T173 together coordinate substrate. K175 acts as the Proton acceptor in catalysis. K177 provides a ligand contact to substrate. The Mg(2+) site is built by K201, D203, and E204. Position 201 is an N6-carboxylysine (K201). Catalysis depends on H294, which acts as the Proton acceptor. Positions 295, 327, and 379 each coordinate substrate.

Belongs to the RuBisCO large chain family. Type I subfamily. In terms of assembly, heterohexadecamer of 8 large chains and 8 small chains; disulfide-linked. The disulfide link is formed within the large subunit homodimers. The cofactor is Mg(2+). The disulfide bond which can form in the large chain dimeric partners within the hexadecamer appears to be associated with oxidative stress and protein turnover.

The protein resides in the plastid. Its subcellular location is the chloroplast. The enzyme catalyses 2 (2R)-3-phosphoglycerate + 2 H(+) = D-ribulose 1,5-bisphosphate + CO2 + H2O. It catalyses the reaction D-ribulose 1,5-bisphosphate + O2 = 2-phosphoglycolate + (2R)-3-phosphoglycerate + 2 H(+). Functionally, ruBisCO catalyzes two reactions: the carboxylation of D-ribulose 1,5-bisphosphate, the primary event in carbon dioxide fixation, as well as the oxidative fragmentation of the pentose substrate in the photorespiration process. Both reactions occur simultaneously and in competition at the same active site. This chain is Ribulose bisphosphate carboxylase large chain, found in Pinus radiata (Monterey pine).